A 55-amino-acid polypeptide reads, in one-letter code: Neurotoxin X-29S (55 aa).

A signal peptide spans 1–23 (MKIFFAVLVILVLFSMLIWTAYG). Intrachain disulfides connect Cys-30-Cys-45, Cys-36-Cys-50, and Cys-39-Cys-53.

In terms of tissue distribution, expressed by the venom gland.

Its subcellular location is the secreted. The polypeptide is Neurotoxin X-29S (Olivierus martensii (Manchurian scorpion)).